A 196-amino-acid chain; its full sequence is uncharacterized protein (196 aa).

Residues 7–67 enclose the HTH tetR-type domain; that stretch reads RNTKEKILTA…AVIDNHVKIW (61 aa). Residues 30-49 constitute a DNA-binding region (H-T-H motif); it reads SINDILDETATGKGQFYYYF.

This is an uncharacterized protein from Lactococcus lactis subsp. lactis (Streptococcus lactis).